The sequence spans 75 residues: Mitochondrial import receptor subunit TOM7-1 (75 aa).

Met1 is modified (N-acetylmethionine). Positions 1 to 28 (MESTISLKVNKGKGKGSKGASSSDDKSK) are disordered. Topologically, residues 1 to 46 (MESTISLKVNKGKGKGSKGASSSDDKSKFDVVKEWTNWSLKKAKVV) are cytoplasmic. A helical transmembrane segment spans residues 47-64 (THYGFIPLVIFVGMNSDP). Over 65 to 75 (KPHLFQLLSPV) the chain is Mitochondrial intermembrane.

The protein belongs to the Tom7 family. In terms of assembly, forms part of the preprotein translocase complex of the outer mitochondrial membrane (TOM complex) which consists of at least 6 different proteins (TOM5, TOM6, TOM7, TOM20, TOM22/TOM9 and TOM40). Expressed in roots, flowers, young cotyledons and leaves.

It is found in the mitochondrion outer membrane. Functionally, seems to act as a modulator of the dynamics of the mitochondrial protein transport machinery. Seems to promote the dissociation of subunits of the outer membrane translocase. The polypeptide is Mitochondrial import receptor subunit TOM7-1 (TOM7-1) (Arabidopsis thaliana (Mouse-ear cress)).